The primary structure comprises 520 residues: 2-isopropylmalate synthase (520 aa).

Positions 5 to 267 (VIIFDTTLRD…HTNINHQEIY (263 aa)) constitute a Pyruvate carboxyltransferase domain. The Mn(2+) site is built by aspartate 14, histidine 202, histidine 204, and asparagine 238. Residues 392–520 (RLDYFSVQSG…RLQQNNQEMV (129 aa)) form a regulatory domain region.

It belongs to the alpha-IPM synthase/homocitrate synthase family. LeuA type 1 subfamily. Homodimer. Requires Mn(2+) as cofactor.

The protein resides in the cytoplasm. It catalyses the reaction 3-methyl-2-oxobutanoate + acetyl-CoA + H2O = (2S)-2-isopropylmalate + CoA + H(+). It functions in the pathway amino-acid biosynthesis; L-leucine biosynthesis; L-leucine from 3-methyl-2-oxobutanoate: step 1/4. Catalyzes the condensation of the acetyl group of acetyl-CoA with 3-methyl-2-oxobutanoate (2-ketoisovalerate) to form 3-carboxy-3-hydroxy-4-methylpentanoate (2-isopropylmalate). This chain is 2-isopropylmalate synthase, found in Yersinia pseudotuberculosis serotype O:1b (strain IP 31758).